The sequence spans 389 residues: Gustatory receptor for bitter taste 22e (389 aa).

Topologically, residues methionine 1–threonine 14 are cytoplasmic. The helical transmembrane segment at glycine 15–tyrosine 35 threads the bilayer. Over aspartate 36–lysine 46 the chain is Extracellular. The chain crosses the membrane as a helical span at residues tryptophan 47 to aspartate 67. The Cytoplasmic portion of the chain corresponds to threonine 68–arginine 142. Residues phenylalanine 143 to leucine 163 traverse the membrane as a helical segment. At glycine 164–serine 170 the chain is on the extracellular side. Asparagine 168 carries an N-linked (GlcNAc...) asparagine glycan. A helical membrane pass occupies residues alanine 171–alanine 191. The Cytoplasmic segment spans residues serine 192–glutamine 254. A helical transmembrane segment spans residues methionine 255–isoleucine 275. Topologically, residues tyrosine 276–lysine 287 are extracellular. Asparagine 281 carries an N-linked (GlcNAc...) asparagine glycan. Residues isoleucine 288–isoleucine 308 form a helical membrane-spanning segment. At cysteine 309 to methionine 366 the chain is on the cytoplasmic side. A helical membrane pass occupies residues glycine 367–tryptophan 387. The Extracellular portion of the chain corresponds to asparagine 388–leucine 389.

The protein belongs to the insect chemoreceptor superfamily. Gustatory receptor (GR) family. Gr22e subfamily. As to expression, taste bristles on the labial palp, labral and cibarial sense organs, chemosensory bristles on the leg and anterior wing margin. In larvae, is expressed in neurons of the terminal external chemosensory organ and in the dorsal pharyngeal sense organ. Neurons expressing Gr22e also express Gr66a and correspond to taste neurons that mediate sensitivity to bitter compounds.

The protein resides in the cell membrane. Functionally, gustatory receptor which mediates acceptance or avoidance behavior, depending on its substrates. Seems to be involved in the sensing of bitter taste since it is expressed in neurons that mediate sensitivity to bitter compounds which are also avoidance-type taste neurons. This chain is Gustatory receptor for bitter taste 22e (Gr22e), found in Drosophila melanogaster (Fruit fly).